A 294-amino-acid chain; its full sequence is MFRGVGTAIVTPFKNGELDLESYERLVRYQLENGVNALIVLGTTGESPTVNEDEREKLVSRTLEIVDGKIPVIVGAGTNSTEKTLKLVKQAEKLGANGVLVVTPYYNKPTQEGLYQHYKYISERTDLGIVVYNVPGRTGVNVLPETAARIAADLKNVVGIKEANPDIDQIDRTVSLTKQARSDFMVWSGNDDRTFYLLCAGGDGVISVVSNVAPKQMVELCAEYFSGNLEKSREVHRKLRPLMKALFVETNPIPVKAALNLMGFIENELRLPLVPASEKTVELLRNVLKESGLL.

Position 44 (Thr-44) interacts with pyruvate. The active-site Proton donor/acceptor is the Tyr-132. The active-site Schiff-base intermediate with substrate is Lys-161. Residue Ile-206 participates in pyruvate binding.

Belongs to the DapA family. As to quaternary structure, homotetramer; dimer of dimers.

It localises to the cytoplasm. The enzyme catalyses L-aspartate 4-semialdehyde + pyruvate = (2S,4S)-4-hydroxy-2,3,4,5-tetrahydrodipicolinate + H2O + H(+). It participates in amino-acid biosynthesis; L-lysine biosynthesis via DAP pathway; (S)-tetrahydrodipicolinate from L-aspartate: step 3/4. Is not inhibited by (S)-lysine, in contrast to E.coli DapA. Its function is as follows. Catalyzes the condensation of (S)-aspartate-beta-semialdehyde [(S)-ASA] and pyruvate to 4-hydroxy-tetrahydrodipicolinate (HTPA). In Thermotoga maritima (strain ATCC 43589 / DSM 3109 / JCM 10099 / NBRC 100826 / MSB8), this protein is 4-hydroxy-tetrahydrodipicolinate synthase.